Consider the following 364-residue polypeptide: FNIP repeat-containing protein DDB_G0277323 (364 aa).

5 FNIP repeats span residues 57–98 (MNIE…DLKY), 155–198 (YDCL…FGWT), 214–244 (LRVL…FGSS), 245–271 (FNQV…NQPI), and 295–340 (FNQP…FINN).

The chain is FNIP repeat-containing protein DDB_G0277323 from Dictyostelium discoideum (Social amoeba).